The primary structure comprises 35 residues: U2-agatoxin-Aop1a (35 aa).

3 cysteine pairs are disulfide-bonded: cysteine 3–cysteine 19, cysteine 10–cysteine 24, and cysteine 18–cysteine 34. Leucine 35 bears the Leucine amide mark.

This sequence belongs to the neurotoxin 01 (U2-agtx) family. As to expression, expressed by the venom gland.

It is found in the secreted. Insect-selective toxin causing rapid but reversible paralysis in crickets. Suppresses the excitatory postsynaptic potentials evoked in lobster neuromuscular synaptic preparations, possibly by blocking the presynaptic calcium channel (Cav). Induces instantaneous reversible paralysis when injected into crickets. This is U2-agatoxin-Aop1a from Allagelena opulenta (Funnel weaving spider).